The primary structure comprises 200 residues: Adenylate kinase (200 aa).

Residue 10-15 coordinates ATP; the sequence is GAGKGT. The interval 30–59 is NMP; it reads STGDMLRAAVAAETPVGLEAKAIMESGGLV. AMP-binding positions include T31, R36, 57-59, 85-88, and Q92; these read GLV and GFPR. The tract at residues 126 to 142 is LID; sequence KRAEETAARGQPVRKDD. R127 provides a ligand contact to ATP. 2 residues coordinate AMP: R139 and R150. K178 contacts ATP.

It belongs to the adenylate kinase family. In terms of assembly, monomer.

The protein resides in the cytoplasm. It carries out the reaction AMP + ATP = 2 ADP. It participates in purine metabolism; AMP biosynthesis via salvage pathway; AMP from ADP: step 1/1. Its function is as follows. Catalyzes the reversible transfer of the terminal phosphate group between ATP and AMP. Plays an important role in cellular energy homeostasis and in adenine nucleotide metabolism. This is Adenylate kinase from Methylorubrum extorquens (strain CM4 / NCIMB 13688) (Methylobacterium extorquens).